A 91-amino-acid polypeptide reads, in one-letter code: Small ribosomal subunit protein uS19 (91 aa).

The protein belongs to the universal ribosomal protein uS19 family.

Protein S19 forms a complex with S13 that binds strongly to the 16S ribosomal RNA. The polypeptide is Small ribosomal subunit protein uS19 (Dechloromonas aromatica (strain RCB)).